Reading from the N-terminus, the 1085-residue chain is Kinesin-like protein cut7 (1085 aa).

The tract at residues 1–70 (MAPRVAPGGS…TDHALHDENE (70 aa)) is disordered. Positions 24 to 37 (PVSTPNSHFRSASN) are enriched in polar residues. The Kinesin motor domain maps to 72-421 (NINVVVRVRG…LEYAARAKSI (350 aa)). Residue 159 to 166 (GQTGTGKT) coordinates ATP. 3 coiled-coil regions span residues 436-604 (LIKD…WNLK), 715-740 (ISSE…LRSL), and 897-955 (LALA…DSIK). 2 consecutive repeats follow at residues 987–998 (DESLCNLETTIE) and 999–1010 (DTSLVKLETTGD). The residue at position 1011 (T1011) is a Phosphothreonine; by CDC2. Positions 1049–1085 (YTSSNQTNEPDVYDKPSNSSRTSLLRSSRSAYSKMKR) are disordered. Low complexity predominate over residues 1065-1078 (SNSSRTSLLRSSRS).

The protein belongs to the TRAFAC class myosin-kinesin ATPase superfamily. Kinesin family. BimC subfamily.

It is found in the cytoplasm. It localises to the cytoskeleton. The protein localises to the microtubule organizing center. Its subcellular location is the spindle pole body. In terms of biological role, could be a spindle pole body motor. On transition from G2 to M phase of the cell cycle, the spindle pole body duplicates; the daughter pole bodies seed microtubules which interdigitate to form a short spindle that elongates to span the nucleus at metaphase. Mutations at cut7 block spindle formation. The polypeptide is Kinesin-like protein cut7 (cut7) (Schizosaccharomyces pombe (strain 972 / ATCC 24843) (Fission yeast)).